Here is a 177-residue protein sequence, read N- to C-terminus: UPF0316 protein STH2077 (177 aa).

The next 2 helical transmembrane spans lie at 9–29 and 41–61; these read AALD…VNTV and LASA…GLVV.

The protein belongs to the UPF0316 family.

The protein localises to the cell membrane. In Symbiobacterium thermophilum (strain DSM 24528 / JCM 14929 / IAM 14863 / T), this protein is UPF0316 protein STH2077.